A 513-amino-acid chain; its full sequence is MAMAAAASPSKILIPPHRASAVTAAASTSCDSLRLLCAPRGRPGPRGLVARPVPRRPFFFSPRAVSDSKSSQTCLDPDASTSVLGIILGGGAGTRLYPLTKKRAKPAVPLGANYRLIDIPVSNCLNSNISKIYVLTQFNSASLNRHLSRAYGSNIGGYKNEGFVEVLAAQQSPDNPDWFQGTADAVRQYLWLFEEHNVMEYLILAGDHLYRMDYEKFIQAHRETDADITVAALPMDEERATAFGLMKIDEEGRIIEFAEKPKGEQLKAMMVDTTILGLEDARAKEMPYIASMGIYVISKHVMLQLLREQFPGANDFGSEVIPGATSTGMRVQAYLYDGYWEDIGTIEAFYNANLGITKKPIPDFSFYDRSAPIYTQPRHLPPSKVLDADVTDSVIGEGCVIKNCKIHHSVVGLRSCISEGAIIEDTLLMGADYYETEADKKLLAEKGGIPIGIGKNSHIKRAIIDKNARIGDNVMIINVDNVQEAARETDGYFIKSGIVTVIKDALLPSGTVI.

The N-terminal 64 residues, 1–64 (MAMAAAASPS…RRPFFFSPRA (64 aa)), are a transit peptide targeting the chloroplast.

The protein belongs to the bacterial/plant glucose-1-phosphate adenylyltransferase family. In terms of assembly, heterotetramer. In terms of tissue distribution, leaves and starchy endosperm.

The protein localises to the plastid. Its subcellular location is the chloroplast. It is found in the amyloplast. The enzyme catalyses alpha-D-glucose 1-phosphate + ATP + H(+) = ADP-alpha-D-glucose + diphosphate. The protein operates within glycan biosynthesis; starch biosynthesis. With respect to regulation, activated by 3'phosphoglycerate, inhibited by orthophosphate. Allosteric regulation. Its function is as follows. This protein plays a role in synthesis of starch. It catalyzes the synthesis of the activated glycosyl donor, ADP-glucose from Glc-1-P and ATP. The sequence is that of Glucose-1-phosphate adenylyltransferase small subunit, chloroplastic/amyloplastic from Hordeum vulgare (Barley).